Consider the following 1053-residue polypeptide: 3-hydroxy-3-methylglutaryl-coenzyme A reductase (1053 aa).

Residues 1 to 8 (MIYKLAAR) are Cytoplasmic-facing. Residues 9-29 (YPIQVIAIVGILVSMAYFSFL) traverse the membrane as a helical segment. Over 30–203 (EALTQEDFPV…LKIASQASKT (174 aa)) the chain is Lumenal. Residue Asn-137 is glycosylated (N-linked (GlcNAc...) asparagine). Residues 204–224 (ELLIVGTAYACMLISIVSLYL) form a helical membrane-spanning segment. The region spanning 204 to 365 (ELLIVGTAYA…FSFFVAILTL (162 aa)) is the SSD domain. Topologically, residues 225–232 (KMRRLGSK) are cytoplasmic. The helical transmembrane segment at 233–253 (FWLFFSVLLSTLFSVQFAMTL) threads the bilayer. At 254–258 (VRASG) the chain is on the lumenal side. The chain crosses the membrane as a helical span at residues 259–279 (VRISLVSLIESLPFLINVVAL). Topologically, residues 280–320 (DKAAELTRQVITRCSVSDSHSPMHEDIAKACRNAAPPILRH) are cytoplasmic. The next 2 helical transmembrane spans lie at 321 to 341 (FSFG…IKQF) and 342 to 362 (FLFA…FVAI). Topologically, residues 363 to 417 (LTLKLEMRRYNAKDDVRKVLIEEGLSESTARHVADGNDSSATTSAGSRYFKVRYG) are cytoplasmic. Residues 418–438 (TKIILFIFIAFNLFELCSIPF) traverse the membrane as a helical segment. Residues 439–526 (KHYAATSAAA…NNWSHYISAS (88 aa)) are Lumenal-facing. N-linked (GlcNAc...) asparagine glycosylation is present at Asn-518. The chain crosses the membrane as a helical span at residues 527–547 (FLSKWIVCALSLSIAVNVFLL). The Cytoplasmic segment spans residues 548-1053 (NAARLNSIKE…KSVNSRVPGR (506 aa)). The active-site Charge relay system is Glu-712. 718-724 (STMRGCK) provides a ligand contact to CoA. NADP(+) contacts are provided by residues 779 to 781 (SRF) and 806 to 814 (DAMGMNMIS). Lys-846 serves as the catalytic Charge relay system. 875 to 877 (VLK) is a CoA binding site. The Charge relay system role is filled by Asp-922. 1017–1018 (SH) serves as a coordination point for CoA. The active-site Proton donor is the His-1018. 1022 to 1023 (NR) provides a ligand contact to NADP(+). Ser-1024 carries the phosphoserine modification. Thr-1028 carries the phosphothreonine modification. The disordered stretch occupies residues 1028–1053 (TPAMDSSAKKPATDALKSVNSRVPGR).

It belongs to the HMG-CoA reductase family.

It is found in the endoplasmic reticulum membrane. It localises to the nucleus envelope. It catalyses the reaction (R)-mevalonate + 2 NADP(+) + CoA = (3S)-3-hydroxy-3-methylglutaryl-CoA + 2 NADPH + 2 H(+). It participates in metabolic intermediate biosynthesis; (R)-mevalonate biosynthesis; (R)-mevalonate from acetyl-CoA: step 3/3. Its function is as follows. Part of the first module of ergosterol biosynthesis pathway that includes the early steps of the pathway, conserved across all eukaryotes, and which results in the formation of mevalonate from acetyl-coenzyme A (acetyl-CoA). Hmg1 catalyzes the reduction of hydroxymethylglutaryl-CoA (HMG-CoA) to mevalonate. The first module starts with the action of the cytosolic acetyl-CoA acetyltransferase eg10 that catalyzes the formation of acetoacetyl-CoA. The hydroxymethylglutaryl-CoA synthases erg13 then condenses acetyl-CoA with acetoacetyl-CoA to form HMG-CoA. The rate-limiting step of the early module is the reduction to mevalonate by the 3-hydroxy-3-methylglutaryl-coenzyme A (HMG-CoA) reductases hcs1. This Schizosaccharomyces pombe (strain 972 / ATCC 24843) (Fission yeast) protein is 3-hydroxy-3-methylglutaryl-coenzyme A reductase.